A 214-amino-acid polypeptide reads, in one-letter code: Homologous-pairing protein 2 homolog (214 aa).

Residues 79–147 are a coiled coil; the sequence is SDSELKDLDA…EHKLTNIKSA (69 aa). The tract at residues 115-179 is DNA-binding; that stretch reads TSSLTTEEML…WKKRKRMATD (65 aa).

This sequence belongs to the HOP2 family.

The protein localises to the nucleus. Its function is as follows. Plays an important role in meiotic recombination. Stimulates DMC1-mediated strand exchange required for pairing of homologous chromosomes during meiosis. The sequence is that of Homologous-pairing protein 2 homolog (psmc3ip) from Xenopus laevis (African clawed frog).